Consider the following 338-residue polypeptide: 4-hydroxy-3-methylbut-2-enyl diphosphate reductase (338 aa).

Cys-21 serves as a coordination point for [4Fe-4S] cluster. (2E)-4-hydroxy-3-methylbut-2-enyl diphosphate is bound by residues His-50 and His-83. The dimethylallyl diphosphate site is built by His-50 and His-83. Positions 50 and 83 each coordinate isopentenyl diphosphate. Residue Cys-105 coordinates [4Fe-4S] cluster. His-133 provides a ligand contact to (2E)-4-hydroxy-3-methylbut-2-enyl diphosphate. Position 133 (His-133) interacts with dimethylallyl diphosphate. Isopentenyl diphosphate is bound at residue His-133. Glu-135 serves as the catalytic Proton donor. Thr-173 is a (2E)-4-hydroxy-3-methylbut-2-enyl diphosphate binding site. Residue Cys-203 participates in [4Fe-4S] cluster binding. Ser-231, Ser-232, Asn-233, and Ser-276 together coordinate (2E)-4-hydroxy-3-methylbut-2-enyl diphosphate. The dimethylallyl diphosphate site is built by Ser-231, Ser-232, Asn-233, and Ser-276. 4 residues coordinate isopentenyl diphosphate: Ser-231, Ser-232, Asn-233, and Ser-276.

Belongs to the IspH family. The cofactor is [4Fe-4S] cluster.

The catalysed reaction is isopentenyl diphosphate + 2 oxidized [2Fe-2S]-[ferredoxin] + H2O = (2E)-4-hydroxy-3-methylbut-2-enyl diphosphate + 2 reduced [2Fe-2S]-[ferredoxin] + 2 H(+). The enzyme catalyses dimethylallyl diphosphate + 2 oxidized [2Fe-2S]-[ferredoxin] + H2O = (2E)-4-hydroxy-3-methylbut-2-enyl diphosphate + 2 reduced [2Fe-2S]-[ferredoxin] + 2 H(+). It participates in isoprenoid biosynthesis; dimethylallyl diphosphate biosynthesis; dimethylallyl diphosphate from (2E)-4-hydroxy-3-methylbutenyl diphosphate: step 1/1. Its pathway is isoprenoid biosynthesis; isopentenyl diphosphate biosynthesis via DXP pathway; isopentenyl diphosphate from 1-deoxy-D-xylulose 5-phosphate: step 6/6. Catalyzes the conversion of 1-hydroxy-2-methyl-2-(E)-butenyl 4-diphosphate (HMBPP) into a mixture of isopentenyl diphosphate (IPP) and dimethylallyl diphosphate (DMAPP). Acts in the terminal step of the DOXP/MEP pathway for isoprenoid precursor biosynthesis. This Streptomyces avermitilis (strain ATCC 31267 / DSM 46492 / JCM 5070 / NBRC 14893 / NCIMB 12804 / NRRL 8165 / MA-4680) protein is 4-hydroxy-3-methylbut-2-enyl diphosphate reductase.